We begin with the raw amino-acid sequence, 211 residues long: Thymidylate kinase (211 aa).

Residue 7 to 14 coordinates ATP; that stretch reads GIDASGKS.

This sequence belongs to the thymidylate kinase family.

The catalysed reaction is dTMP + ATP = dTDP + ADP. Its function is as follows. Phosphorylation of dTMP to form dTDP in both de novo and salvage pathways of dTTP synthesis. The sequence is that of Thymidylate kinase from Mesomycoplasma hyopneumoniae (strain 7448) (Mycoplasma hyopneumoniae).